The sequence spans 314 residues: Ribosomal RNA small subunit methyltransferase H (314 aa).

S-adenosyl-L-methionine contacts are provided by residues 37–39 (GGH), aspartate 57, phenylalanine 83, aspartate 105, and glutamine 112.

It belongs to the methyltransferase superfamily. RsmH family.

It is found in the cytoplasm. The enzyme catalyses cytidine(1402) in 16S rRNA + S-adenosyl-L-methionine = N(4)-methylcytidine(1402) in 16S rRNA + S-adenosyl-L-homocysteine + H(+). Its function is as follows. Specifically methylates the N4 position of cytidine in position 1402 (C1402) of 16S rRNA. This Thioalkalivibrio sulfidiphilus (strain HL-EbGR7) protein is Ribosomal RNA small subunit methyltransferase H.